The sequence spans 278 residues: 1-acyl-sn-glycerol-3-phosphate acyltransferase beta (278 aa).

The N-terminal stretch at 1–23 (MDPWPWLTAALLLLLLLVQLSRT) is a signal peptide. Residues 24–29 (ARFYAK) lie on the Lumenal side of the membrane. Residues 30–50 (VGLYCVLCLSFSAAASIVCLL) traverse the membrane as a helical segment. At 51–121 (RHGGRTVDNM…PKRCVQIAKR (71 aa)) the chain is on the cytoplasmic side. The short motif at 98 to 103 (HQSILD) is the HXXXXD motif element. Residues 122 to 142 (ELMFTGPVGLIMYLGGVYFIN) form a helical membrane-spanning segment. Residues 143-278 (RQQARTAMSV…IKEPGVLPAQ (136 aa)) lie on the Lumenal side of the membrane. Residues 172-175 (EGTR) carry the EGTR motif motif.

The protein belongs to the 1-acyl-sn-glycerol-3-phosphate acyltransferase family. Expressed at high levels in the liver, at intermediate levels in the kidney, gut, heart and skeletal muscles. Undetectable in brain and spleen.

The protein resides in the endoplasmic reticulum membrane. The catalysed reaction is a 1-acyl-sn-glycero-3-phosphate + an acyl-CoA = a 1,2-diacyl-sn-glycero-3-phosphate + CoA. It carries out the reaction 1-(9Z-octadecenoyl)-sn-glycero-3-phosphate + (9Z)-octadecenoyl-CoA = 1,2-di-(9Z-octadecenoyl)-sn-glycero-3-phosphate + CoA. The enzyme catalyses 1-(9Z-octadecenoyl)-sn-glycero-3-phosphate + hexadecanoyl-CoA = 1-(9Z)-octadecenoyl-2-hexadecanoyl-sn-glycero-3-phosphate + CoA. It catalyses the reaction heptadecanoyl-CoA + 1-(9Z-octadecenoyl)-sn-glycero-3-phosphate = 1-(9Z)-octadecenoyl-2-heptadecanoyl-sn-glycero-3-phosphate + CoA. The catalysed reaction is 1-(9Z-octadecenoyl)-sn-glycero-3-phosphate + (9Z,12Z)-octadecadienoyl-CoA = 1-(9Z)-octadecenoyl-2-(9Z,12Z)-octadecadienoyl-sn-glycero-3-phosphate + CoA. It carries out the reaction 1-(9Z-octadecenoyl)-sn-glycero-3-phosphate + tetradecanoyl-CoA = 1-(9Z)-octadecenoyl-2-tetradecanoyl-sn-glycero-3-phosphate + CoA. The enzyme catalyses pentadecanoyl-CoA + 1-(9Z-octadecenoyl)-sn-glycero-3-phosphate = 1-(9Z)-octadecenoyl-2-pentadecanoyl-sn-glycero-3-phosphate + CoA. It catalyses the reaction 1-hexadecanoyl-sn-glycero-3-phosphate + (9Z)-octadecenoyl-CoA = 1-hexadecanoyl-2-(9Z-octadecenoyl)-sn-glycero-3-phosphate + CoA. The catalysed reaction is 1-tetradecanoyl-sn-glycerol 3-phosphate + (9Z)-octadecenoyl-CoA = 1-tetradecanoyl-2-(9Z)-octadecenoyl-sn-glycero-3-phosphate + CoA. It carries out the reaction 1-(9Z,12Z,15Z)-octadecatrienoyl-sn-glycero-3-phosphate + (9Z)-octadecenoyl-CoA = 1-(9Z,12Z,15Z)-octadecatrienoyl-2-(9Z)-octadecenoyl-sn-glycero-3-phosphate + CoA. The enzyme catalyses 1-(6Z,9Z,12Z-octadecatrienoyl)-sn-glycero-3-phosphate + (9Z)-octadecenoyl-CoA = (6Z,9Z,12Z)-octadecatrienoyl-2-(9Z)-octadecenoyl-sn-glycero-3-phosphate + CoA. It catalyses the reaction 1-eicosanoyl-sn-glycero-3-phosphate + (9Z)-octadecenoyl-CoA = 1-eicosanoyl-2-(9Z)-octadecenoyl-sn-glycero-3-phosphate + CoA. The catalysed reaction is 1-hexadecanoyl-sn-glycero-3-phosphate + octadecanoyl-CoA = 1-hexadecanoyl-2-octadecanoyl-sn-glycero-3-phosphate + CoA. It carries out the reaction 1-hexadecanoyl-sn-glycero-3-phosphate + (5Z,8Z,11Z,14Z)-eicosatetraenoyl-CoA = 1-hexadecanoyl-2-(5Z,8Z,11Z,14Z-eicosatetraenoyl)-sn-glycero-3-phosphate + CoA. The enzyme catalyses 1-hexadecanoyl-sn-glycero-3-phosphate + hexadecanoyl-CoA = 1,2-dihexadecanoyl-sn-glycero-3-phosphate + CoA. It catalyses the reaction 1-hexadecanoyl-sn-glycero-3-phosphate + tetradecanoyl-CoA = 1-hexadecanoyl-2-tetradecanoyl-sn-glycero-3-phosphate + CoA. The catalysed reaction is (11Z)-octadecenoyl-CoA + 1-(9Z-octadecenoyl)-sn-glycero-3-phosphate = 1-(9Z)-octadecenoyl-2-(11Z)-octadecenoyl-sn-glycero-3-phosphate + CoA. It participates in phospholipid metabolism; CDP-diacylglycerol biosynthesis; CDP-diacylglycerol from sn-glycerol 3-phosphate: step 2/3. In terms of biological role, converts 1-acyl-sn-glycerol-3-phosphate (lysophosphatidic acid or LPA) into 1,2-diacyl-sn-glycerol-3-phosphate (phosphatidic acid or PA) by incorporating an acyl moiety at the sn-2 position of the glycerol backbone. The sequence is that of 1-acyl-sn-glycerol-3-phosphate acyltransferase beta (Agpat2) from Mus musculus (Mouse).